Consider the following 394-residue polypeptide: Protein TsgA homolog (394 aa).

12 consecutive transmembrane segments (helical) span residues 11 to 31, 51 to 71, 78 to 98, 101 to 121, 134 to 154, 162 to 182, 206 to 226, 250 to 270, 273 to 293, 297 to 317, 332 to 352, and 361 to 381; these read WISFFSYALTGALVIVTGMVM, FLNAGILISIFLNAWLMEIVP, FGFVLMVAAVAGLMVSHSIAL, VSMFVLGLVSGITMSIGTFLI, LLFTDSFFSMAGMIFPMVAAV, WYWVYACIGLVYVAIFVLTFG, IGVLFLSVAALCYILGQLGFI, FWMSYMFGMWAFSFILRFFDL, ILTVLAGLATVLMYLFINGAP, AWFILTLGFFSSAIYTSIITL, FVLTCGTIGTMLTFVVTGPIV, and LQTANGLYAVVFVMCLILGFV.

It belongs to the major facilitator superfamily. TsgA family.

It localises to the cell inner membrane. This is Protein TsgA homolog from Enterobacter sp. (strain 638).